The chain runs to 544 residues: Glucans biosynthesis protein G 1 (544 aa).

The first 33 residues, Met1–Ala33, serve as a signal peptide directing secretion. Residues Ser36–Ala58 are disordered.

This sequence belongs to the OpgD/OpgG family.

The protein resides in the periplasm. It participates in glycan metabolism; osmoregulated periplasmic glucan (OPG) biosynthesis. Functionally, involved in the biosynthesis of osmoregulated periplasmic glucans (OPGs). The polypeptide is Glucans biosynthesis protein G 1 (opgG1) (Shewanella oneidensis (strain ATCC 700550 / JCM 31522 / CIP 106686 / LMG 19005 / NCIMB 14063 / MR-1)).